Reading from the N-terminus, the 302-residue chain is Large ribosomal subunit protein uL3c (302 aa).

The N-terminal 36 residues, M1–M36, are a transit peptide targeting the chloroplast. The tract at residues F208 to A239 is disordered.

It belongs to the universal ribosomal protein uL3 family. As to quaternary structure, part of the 50S ribosomal subunit.

It localises to the plastid. The protein resides in the chloroplast. In terms of biological role, one of the primary rRNA binding proteins, it binds directly near the 3'-end of the 23S rRNA, where it nucleates assembly of the 50S subunit. This is Large ribosomal subunit protein uL3c (RPL3) from Bigelowiella natans (Pedinomonas minutissima).